We begin with the raw amino-acid sequence, 662 residues long: UvrABC system protein B (662 aa).

The 158-residue stretch at 31-188 folds into the Helicase ATP-binding domain; sequence DNIEGGEKAQ…NDLVDIQFER (158 aa). 44 to 51 contributes to the ATP binding site; the sequence is GATGTGKT. The Beta-hairpin motif lies at 97-120; it reads YYDYYQPEAYVPSSDTYIEKDSSV. The Helicase C-terminal domain occupies 435 to 601; that stretch reads QIDDLLGEIN…TIKKEIRDLI (167 aa). The 36-residue stretch at 626–661 folds into the UVR domain; the sequence is KELVKKLEKQMQEAVEVLDFELAAQIRDMMLEVKAL.

It belongs to the UvrB family. Forms a heterotetramer with UvrA during the search for lesions. Interacts with UvrC in an incision complex.

The protein resides in the cytoplasm. In terms of biological role, the UvrABC repair system catalyzes the recognition and processing of DNA lesions. A damage recognition complex composed of 2 UvrA and 2 UvrB subunits scans DNA for abnormalities. Upon binding of the UvrA(2)B(2) complex to a putative damaged site, the DNA wraps around one UvrB monomer. DNA wrap is dependent on ATP binding by UvrB and probably causes local melting of the DNA helix, facilitating insertion of UvrB beta-hairpin between the DNA strands. Then UvrB probes one DNA strand for the presence of a lesion. If a lesion is found the UvrA subunits dissociate and the UvrB-DNA preincision complex is formed. This complex is subsequently bound by UvrC and the second UvrB is released. If no lesion is found, the DNA wraps around the other UvrB subunit that will check the other stand for damage. The polypeptide is UvrABC system protein B (Streptococcus pneumoniae (strain Hungary19A-6)).